A 1025-amino-acid polypeptide reads, in one-letter code: Multidrug resistance protein MdtC (1025 aa).

12 helical membrane-spanning segments follow: residues 3-23 (FFAL…AITL), 333-353 (EVEQ…FLFL), 360-380 (IIPA…MYLC), 387-407 (LSLM…IVVL), 431-451 (VGFT…PLLL), 463-483 (FAVT…TLTP), 528-548 (LVGA…ISIP), 853-873 (VILI…LYES), 875-895 (VHPL…LLAL), 897-917 (LFNA…IGIV), 953-973 (PIMM…LSGG), and 984-1004 (ITIV…TPVV).

It belongs to the resistance-nodulation-cell division (RND) (TC 2.A.6) family. MdtC subfamily. Part of a tripartite efflux system composed of MdtA, MdtB and MdtC. MdtC forms a heteromultimer with MdtB.

It localises to the cell inner membrane. Functionally, the MdtABC tripartite complex confers resistance against novobiocin and deoxycholate. In Escherichia coli O81 (strain ED1a), this protein is Multidrug resistance protein MdtC.